The following is a 1060-amino-acid chain: DNA-directed RNA polymerase subunit beta (1060 aa).

This sequence belongs to the RNA polymerase beta chain family. In plastids the minimal PEP RNA polymerase catalytic core is composed of four subunits: alpha, beta, beta', and beta''. When a (nuclear-encoded) sigma factor is associated with the core the holoenzyme is formed, which can initiate transcription.

It localises to the plastid. Its subcellular location is the chloroplast. It carries out the reaction RNA(n) + a ribonucleoside 5'-triphosphate = RNA(n+1) + diphosphate. In terms of biological role, DNA-dependent RNA polymerase catalyzes the transcription of DNA into RNA using the four ribonucleoside triphosphates as substrates. The sequence is that of DNA-directed RNA polymerase subunit beta from Calycanthus floridus var. glaucus (Eastern sweetshrub).